The chain runs to 138 residues: Acidic phospholipase A2 1 (138 aa).

A signal peptide spans 1–16 (MRTLWIMAVLLVGVEG). 7 disulfide bridges follow: cysteine 42-cysteine 131, cysteine 44-cysteine 60, cysteine 59-cysteine 111, cysteine 65-cysteine 138, cysteine 66-cysteine 104, cysteine 73-cysteine 97, and cysteine 91-cysteine 102. The Ca(2+) site is built by phenylalanine 43, glycine 45, and glycine 47. Histidine 63 is a catalytic residue. Aspartate 64 provides a ligand contact to Ca(2+). The active site involves aspartate 105.

It belongs to the phospholipase A2 family. Group II subfamily. D49 sub-subfamily. The cofactor is Ca(2+). As to expression, expressed by the venom gland.

The protein localises to the secreted. The catalysed reaction is a 1,2-diacyl-sn-glycero-3-phosphocholine + H2O = a 1-acyl-sn-glycero-3-phosphocholine + a fatty acid + H(+). In terms of biological role, snake venom phospholipase A2 (PLA2) that has high lipolytic activity. PLA2 catalyzes the calcium-dependent hydrolysis of the 2-acyl groups in 3-sn-phosphoglycerides. The polypeptide is Acidic phospholipase A2 1 (Craspedocephalus gramineus (Bamboo pit viper)).